A 296-amino-acid polypeptide reads, in one-letter code: Mycothiol acetyltransferase (296 aa).

2 consecutive N-acetyltransferase domains span residues 8-146 and 151-296; these read RSPE…PPVE and ISVR…GPPV. A 1D-myo-inositol 2-(L-cysteinylamino)-2-deoxy-alpha-D-glucopyranoside-binding site is contributed by Glu-39. Acetyl-CoA is bound at residue 76-78; it reads VVT. Residues Glu-178, Lys-220, and Glu-228 each coordinate 1D-myo-inositol 2-(L-cysteinylamino)-2-deoxy-alpha-D-glucopyranoside. Acetyl-CoA contacts are provided by residues 232–234 and 239–245; these read VGV and QGEGLGR. Tyr-266 lines the 1D-myo-inositol 2-(L-cysteinylamino)-2-deoxy-alpha-D-glucopyranoside pocket.

The protein belongs to the acetyltransferase family. MshD subfamily. In terms of assembly, monomer.

It catalyses the reaction 1D-myo-inositol 2-(L-cysteinylamino)-2-deoxy-alpha-D-glucopyranoside + acetyl-CoA = mycothiol + CoA + H(+). In terms of biological role, catalyzes the transfer of acetyl from acetyl-CoA to desacetylmycothiol (Cys-GlcN-Ins) to form mycothiol. The chain is Mycothiol acetyltransferase from Kytococcus sedentarius (strain ATCC 14392 / DSM 20547 / JCM 11482 / CCUG 33030 / NBRC 15357 / NCTC 11040 / CCM 314 / 541) (Micrococcus sedentarius).